The following is a 280-amino-acid chain: Succinate dehydrogenase [ubiquinone] iron-sulfur subunit, mitochondrial (280 aa).

The transit peptide at 1–25 (MAAVCFSLSRCCSAVHRPAVTAVRF) directs the protein to the mitochondrion. The 2Fe-2S ferredoxin-type domain maps to 39–129 (KKFQIYRWDP…TSKVTKIYPL (91 aa)). [2Fe-2S] cluster contacts are provided by C92, C97, C100, and C112. In terms of domain architecture, 4Fe-4S ferredoxin-type spans 175-205 (DRQKLDGLYECILCACCSTSCPSYWWNADKY). [4Fe-4S] cluster is bound by residues C185, C188, and C191. Residue C195 coordinates [3Fe-4S] cluster. A ubiquinone is bound at residue W200. 2 residues coordinate [3Fe-4S] cluster: C242 and C248. Position 252 (C252) interacts with [4Fe-4S] cluster.

It belongs to the succinate dehydrogenase/fumarate reductase iron-sulfur protein family. Component of complex II composed of four subunits: the flavoprotein (FP) sdha, iron-sulfur protein (IP) sdhb, and a cytochrome b composed of sdhc and sdhd. Requires [2Fe-2S] cluster as cofactor. The cofactor is [3Fe-4S] cluster. [4Fe-4S] cluster is required as a cofactor.

The protein localises to the mitochondrion inner membrane. It catalyses the reaction a quinone + succinate = fumarate + a quinol. It carries out the reaction (R)-malate + a quinone = enol-oxaloacetate + a quinol. The catalysed reaction is (S)-malate + a quinone = enol-oxaloacetate + a quinol. The protein operates within carbohydrate metabolism; tricarboxylic acid cycle; fumarate from succinate (eukaryal route): step 1/1. Enol-oxaloacetate inhibits the succinate dehydrogenase activity. In terms of biological role, iron-sulfur protein (IP) subunit of the succinate dehydrogenase complex (mitochondrial respiratory chain complex II), responsible for transferring electrons from succinate to ubiquinone (coenzyme Q). SDH also oxidizes malate to the non-canonical enol form of oxaloacetate, enol-oxaloacetate. Enol-oxaloacetate, which is a potent inhibitor of the succinate dehydrogenase activity, is further isomerized into keto-oxaloacetate. The polypeptide is Succinate dehydrogenase [ubiquinone] iron-sulfur subunit, mitochondrial (sdhb) (Danio rerio (Zebrafish)).